We begin with the raw amino-acid sequence, 240 residues long: 4-hydroxy-tetrahydrodipicolinate reductase (240 aa).

Residues 79-81 (ATT) and 103-106 (SANM) each bind NAD(+). The Proton donor/acceptor role is filled by His135. Residue His136 coordinates (S)-2,3,4,5-tetrahydrodipicolinate. The active-site Proton donor is Lys139. 145–146 (GT) is a (S)-2,3,4,5-tetrahydrodipicolinate binding site.

This sequence belongs to the DapB family.

Its subcellular location is the cytoplasm. The enzyme catalyses (S)-2,3,4,5-tetrahydrodipicolinate + NAD(+) + H2O = (2S,4S)-4-hydroxy-2,3,4,5-tetrahydrodipicolinate + NADH + H(+). It carries out the reaction (S)-2,3,4,5-tetrahydrodipicolinate + NADP(+) + H2O = (2S,4S)-4-hydroxy-2,3,4,5-tetrahydrodipicolinate + NADPH + H(+). The protein operates within amino-acid biosynthesis; L-lysine biosynthesis via DAP pathway; (S)-tetrahydrodipicolinate from L-aspartate: step 4/4. Its function is as follows. Catalyzes the conversion of 4-hydroxy-tetrahydrodipicolinate (HTPA) to tetrahydrodipicolinate. The polypeptide is 4-hydroxy-tetrahydrodipicolinate reductase (Staphylococcus epidermidis (strain ATCC 12228 / FDA PCI 1200)).